A 208-amino-acid polypeptide reads, in one-letter code: Small ribosomal subunit protein uS4A (208 aa).

The S4 RNA-binding domain maps to S98–A159.

The protein belongs to the universal ribosomal protein uS4 family. Part of the 30S ribosomal subunit. Contacts protein S5. The interaction surface between S4 and S5 is involved in control of translational fidelity.

In terms of biological role, one of the primary rRNA binding proteins, it binds directly to 16S rRNA where it nucleates assembly of the body of the 30S subunit. Its function is as follows. With S5 and S12 plays an important role in translational accuracy. This is Small ribosomal subunit protein uS4A (rpsD1) from Nitrosomonas europaea (strain ATCC 19718 / CIP 103999 / KCTC 2705 / NBRC 14298).